The following is a 392-amino-acid chain: Putative cystathionine gamma-lyase (392 aa).

The span at 1–10 (MSDSATTDSA) shows a compositional bias: polar residues. A disordered region spans residues 1-41 (MSDSATTDSAGTGGERSASAPGDGTRAVRAGLPEPVKHEPT). K216 carries the post-translational modification N6-(pyridoxal phosphate)lysine.

The protein belongs to the trans-sulfuration enzymes family. Requires pyridoxal 5'-phosphate as cofactor.

It is found in the cytoplasm. The catalysed reaction is L,L-cystathionine + H2O = 2-oxobutanoate + L-cysteine + NH4(+). Its pathway is amino-acid biosynthesis; L-cysteine biosynthesis; L-cysteine from L-homocysteine and L-serine: step 2/2. In Streptomyces coelicolor (strain ATCC BAA-471 / A3(2) / M145), this protein is Putative cystathionine gamma-lyase (cysA).